Consider the following 238-residue polypeptide: B-box zinc finger protein 25 (238 aa).

The Zn(2+) site is built by Cys-5, Cys-8, Cys-28, His-33, Cys-57, Cys-60, Cys-80, and His-85. The B box-type 1; atypical zinc finger occupies 5 to 47 (CDVCEKAPATLICCADEAALCAKCDVEVHAANKLASKHQRLFL). The B box-type 2; atypical zinc finger occupies 57–99 (CDICLEKAAFIFCVEDRALLCRDCDEATHAPNTRSANHQRFLA). Residues 115-139 (VEKNHFDPSNQQSLSKPPTQQPAAP) are disordered. Residues 121–137 (DPSNQQSLSKPPTQQPA) are compositionally biased toward polar residues. Positions 226-238 (DDEEEHFLVPDLG) are interaction with COP1.

As to quaternary structure, interacts with COP1 WD40 domain. Interacts with HY5 and HYH. Post-translationally, COP1-mediated ubiquitination and subsequent proteasomal degradation of BBX25/STH occurs in the dark.

The protein localises to the nucleus. Functionally, acts as a negative regulator of seedling photomorphogenesis. BBX25/STH and BBX24/STO function as transcriptional corepressors of HY5 activity, leading to the down-regulation of BBX22 expression. BBX25/STH acts additively with BBX24/STO during de-etiolation and the hypocotyl shade avoidance response. This is B-box zinc finger protein 25 from Arabidopsis thaliana (Mouse-ear cress).